A 122-amino-acid polypeptide reads, in one-letter code: Large ribosomal subunit protein uL14 (122 aa).

Belongs to the universal ribosomal protein uL14 family. In terms of assembly, part of the 50S ribosomal subunit. Forms a cluster with proteins L3 and L19. In the 70S ribosome, L14 and L19 interact and together make contacts with the 16S rRNA in bridges B5 and B8.

In terms of biological role, binds to 23S rRNA. Forms part of two intersubunit bridges in the 70S ribosome. The polypeptide is Large ribosomal subunit protein uL14 (Streptococcus gordonii (strain Challis / ATCC 35105 / BCRC 15272 / CH1 / DL1 / V288)).